Consider the following 1133-residue polypeptide: Envelopment polyprotein (1133 aa).

Residues Met-1–Leu-17 form the signal peptide. Topologically, residues Lys-18 to Ala-484 are lumenal. 11 disulfide bridges follow: Cys-27–Cys-149, Cys-61–Cys-155, Cys-107–Cys-126, Cys-131–Cys-136, Cys-173–Cys-183, Cys-208–Cys-245, Cys-232–Cys-349, Cys-374–Cys-433, Cys-378–Cys-387, Cys-403–Cys-422, and Cys-450–Cys-473. A glycan (N-linked (GlcNAc...) asparagine; by host) is linked at Asn-132. 2 N-linked (GlcNAc...) asparagine; by host glycosylation sites follow: Asn-233 and Asn-345. N-linked (GlcNAc...) asparagine; by host glycosylation is present at Asn-397. Residues Leu-485–Leu-504 traverse the membrane as a helical segment. The Cytoplasmic portion of the chain corresponds to Leu-505 to Tyr-626. Residues Leu-514–Lys-531 form a binding to the ribonucleoprotein region. 2 consecutive CCHC-type zinc fingers follow at residues Cys-543–Cys-563 and Cys-568–Cys-589. Binding to the ribonucleoprotein regions lie at residues Tyr-586 to Val-603, Gln-590 to Lys-601, and Gly-609 to Ser-623. The ITAM domain occupies Gly-609–Thr-632. The short motif at Tyr-613–Leu-616 is the YxxL element. The helical transmembrane segment at Ile-627–Ala-647 threads the bilayer. Residues Glu-648–Trp-1104 lie on the Lumenal side of the membrane. Cystine bridges form between Cys-733-Cys-768, Cys-737-Cys-775, Cys-749-Cys-883, Cys-763-Cys-894, Cys-778-Cys-902, Cys-804-Cys-813, Cys-821-Cys-830, and Cys-861-Cys-865. The fusion loop stretch occupies residues Tyr-755–Cys-775. Asn-926 carries an N-linked (GlcNAc...) asparagine; by host glycan. 5 disulfides stabilise this stretch: Cys-968–Cys-998, Cys-991–Cys-1043, Cys-1008–Cys-1013, Cys-1044–Cys-1049, and Cys-1083–Cys-1087. A helical transmembrane segment spans residues Val-1105–Cys-1125. Residues Leu-1120–Ser-1133 are binding to the ribonucleoprotein. Residues Pro-1126 to Ser-1133 lie on the Cytoplasmic side of the membrane.

Belongs to the hantavirus envelope glycoprotein family. In terms of assembly, homodimer. Homotetramer; forms heterotetrameric Gn-Gc spikes in the pre-fusion conformation. Interacts (via C-terminus) with the nucleoprotein. Interacts with host TUFM; this interaction contributes to the virus-induced degradation of mitochondria by autophagy, which leads to degradation of host MAVS and inhibition of type I interferon (IFN) responses. Interacts with host MAP1LC3B; this interaction contributes to the virus-induced degradation of mitochondria by autophagy, which leads to degradation of host MAVS and inhibition of type I interferon (IFN) responses. As to quaternary structure, homodimer. Homotetramer; forms heterotetrameric Gn-Gc spikes in the pre-fusion conformation. Homotrimer; forms homotrimer in the post-fusion conformation at acidic pH. Interacts (via C-terminus) with the nucleoprotein. Post-translationally, envelope polyprotein precursor is quickly cleaved in vivo just after synthesis, presumably by host signal peptidase.

Its subcellular location is the virion membrane. It is found in the host cell surface. The protein localises to the host Golgi apparatus membrane. The protein resides in the host endoplasmic reticulum membrane. It localises to the host mitochondrion. In terms of biological role, forms homotetramers with glycoprotein C at the surface of the virion. Attaches the virion to host cell receptors including integrin ITGAV/ITGB3. This attachment induces virion internalization predominantly through clathrin-dependent endocytosis. Mediates the assembly and budding of infectious virus particles through its interaction with the nucleocapsid protein and the viral genome. May dysregulate normal immune and endothelial cell responses through an ITAM motif. Translocates to mitochondria, binds to host TUFM and recruits MAP1LC3B. These interactions induce mitochondrial autophagy and therefore destruction of host MAVS leading to inhibition of type I interferon (IFN) responses. Concomitant breakdown of glycoprotein N is apparently prevented by the nucleoprotein that may inhibit Gn-stimulated autophagosome-lysosome fusion. Interacts with the viral genomic RNA. Functionally, forms homotetramers with glycoprotein N at the surface of the virion. Attaches the virion to host cell receptors including integrin ITGAV/ITGB3. This attachment induces virion internalization predominantly through clathrin-dependent endocytosis. Class II fusion protein that promotes fusion of viral membrane with host endosomal membrane after endocytosis of the virion. In Homo sapiens (Human), this protein is Envelopment polyprotein (GP).